The primary structure comprises 237 residues: Ribose-5-phosphate isomerase A (237 aa).

Residues 28-31, 83-86, and 97-100 contribute to the substrate site; these read SGST, DGAD, and KGRG. The active-site Proton acceptor is the glutamate 106. Position 124 (lysine 124) interacts with substrate.

The protein belongs to the ribose 5-phosphate isomerase family. Homodimer.

The catalysed reaction is aldehydo-D-ribose 5-phosphate = D-ribulose 5-phosphate. Its pathway is carbohydrate degradation; pentose phosphate pathway; D-ribose 5-phosphate from D-ribulose 5-phosphate (non-oxidative stage): step 1/1. Its function is as follows. Catalyzes the reversible conversion of ribose-5-phosphate to ribulose 5-phosphate. The polypeptide is Ribose-5-phosphate isomerase A (Thermomicrobium roseum (strain ATCC 27502 / DSM 5159 / P-2)).